A 596-amino-acid polypeptide reads, in one-letter code: Pumilio homolog 12 (596 aa).

The 343-residue stretch at 254–596 folds into the PUM-HD domain; it reads LNEDLTMSLN…KVLSALSSKK (343 aa). 8 Pumilio repeats span residues 277–312, 313–348, 349–388, 389–424, 425–460, 461–496, 497–532, and 533–570; these read EARGKIYYLAKDQHGCRFLQRIFSEKDGNDIEMIFN, EIIDYISELMMDPFGNYLVQKLLEVCNEDQRMQIVH, SITRKPGLLIKISCDMHGTRAVQKIVETAKREEEISIIIS, ALKHGIVHLIKNVNGNHVVQRCLQYLLPYCGKFLFE, AAITHCVELATDRHGCCVLQKCLGYSEGEQKQHLVS, EIASNALLLSQDPFGNYVLQYVFELQLQWATFEILE, QLEGNYTELSMQKCSSNVVEKCLKLADDKHRARIIR, and ELINYGRLDQVMLDPYGNYVIQAALKQSKGNVHALLVD.

It is found in the cytoplasm. The protein resides in the nucleus. Its function is as follows. Sequence-specific RNA-binding protein that regulates translation and mRNA stability by binding the 3'-UTR of target mRNAs. This is Pumilio homolog 12 (APUM12) from Arabidopsis thaliana (Mouse-ear cress).